The primary structure comprises 396 residues: Probable splicing factor YJU2B (396 aa).

The tract at residues 1–26 (MGERKGVNKYYPPDFNPEKHGSLNRY) is disordered. A Phosphoserine modification is found at serine 40. Residues 182-214 (LNSMLRRRFREKKKAIQEEEERDQALQAKASLT) adopt a coiled-coil conformation. Residues 295–396 (IVRRRSRDVP…VADYSDSESE (102 aa)) form a disordered region. Serine 306 carries the phosphoserine modification. A compositionally biased stretch (basic and acidic residues) spans 315–327 (KSGEPRVPEEAAQ). Residues 340-350 (TTETPKCSSPR) show a composition bias toward polar residues. Serine 362 is subject to Phosphoserine.

The protein belongs to the CWC16 family.

It is found in the nucleus. Functionally, may be involved in mRNA splicing. This Homo sapiens (Human) protein is Probable splicing factor YJU2B.